The following is a 453-amino-acid chain: MQAIAKNDIKTGTVVDLTHEGHGVVKIDRFPIFIPQALINEQIEYKIIKVKKNFAIGKLLNINTRSENRVAPPCIYYERCGGCQLQHLSYEAQLEMKKEQVINLFQRKAHFDNSKINDTVGMTDPWRYRNKSQIPVGKNEQNEVIMGFYRQRSHDIIDMESCLIQDSQHQEVMNEVKSILKDLNVSIYQEQLKKGLMRHLVVRTGYHTDEMMIIFVTNGKKWPQKNAVVEKILDAFPNVTSIKQNINDSHSNVIMGRQSITLYGKDTIIDQLTDSTFKISDQSFYQINSEQTEKLYNKAIEYAQLTGNEVVLDTYCGIGTIGLYMAPHAKHVYGVEVVPSSIEDAQQNATINQCNNTTFVCGKAEEVILQWKAQGIKPDVVMVDPPRKGCDETFIQTLLTLEPKRIVYISCNPATQQRDALLLAEKYQLEEVTPVDMFPQTTHVETVALFNLK.

Residues Cys74, Cys80, Cys83, and Cys162 each contribute to the [4Fe-4S] cluster site. 4 residues coordinate S-adenosyl-L-methionine: Gln286, Tyr315, Glu336, and Asp384. Cys411 (nucleophile) is an active-site residue.

This sequence belongs to the class I-like SAM-binding methyltransferase superfamily. RNA M5U methyltransferase family.

This is an uncharacterized protein from Staphylococcus aureus (strain Mu50 / ATCC 700699).